The sequence spans 497 residues: Lysine--tRNA ligase (497 aa).

The Mg(2+) site is built by glutamate 409 and glutamate 416.

It belongs to the class-II aminoacyl-tRNA synthetase family. Homodimer. Mg(2+) serves as cofactor.

Its subcellular location is the cytoplasm. The enzyme catalyses tRNA(Lys) + L-lysine + ATP = L-lysyl-tRNA(Lys) + AMP + diphosphate. The sequence is that of Lysine--tRNA ligase from Streptococcus pyogenes serotype M49 (strain NZ131).